We begin with the raw amino-acid sequence, 299 residues long: tRNA dimethylallyltransferase (299 aa).

Residue 13–20 (GPTASGKT) participates in ATP binding. Substrate is bound at residue 15-20 (TASGKT). Positions 38–41 (DSRQ) are interaction with substrate tRNA.

It belongs to the IPP transferase family. As to quaternary structure, monomer. Mg(2+) is required as a cofactor.

The enzyme catalyses adenosine(37) in tRNA + dimethylallyl diphosphate = N(6)-dimethylallyladenosine(37) in tRNA + diphosphate. In terms of biological role, catalyzes the transfer of a dimethylallyl group onto the adenine at position 37 in tRNAs that read codons beginning with uridine, leading to the formation of N6-(dimethylallyl)adenosine (i(6)A). This Prochlorococcus marinus (strain AS9601) protein is tRNA dimethylallyltransferase.